Reading from the N-terminus, the 183-residue chain is UPF0398 protein BLi02355/BL05236 (183 aa).

The protein belongs to the UPF0398 family.

This chain is UPF0398 protein BLi02355/BL05236, found in Bacillus licheniformis (strain ATCC 14580 / DSM 13 / JCM 2505 / CCUG 7422 / NBRC 12200 / NCIMB 9375 / NCTC 10341 / NRRL NRS-1264 / Gibson 46).